Consider the following 620-residue polypeptide: Chaperone protein DnaK (620 aa).

Threonine 197 is subject to Phosphothreonine; by autocatalysis. Residues 597–620 form a disordered region; that stretch reads AMANKNNAEQPKKKDDDVIDAEVE.

This sequence belongs to the heat shock protein 70 family.

Acts as a chaperone. The polypeptide is Chaperone protein DnaK (Helicobacter acinonychis (strain Sheeba)).